A 663-amino-acid chain; its full sequence is Transketolase 1 (663 aa).

Residue histidine 26 participates in substrate binding. Residue lysine 46 is modified to N6-acetyllysine. Residues histidine 66 and 114–116 (GPL) contribute to the thiamine diphosphate site. Aspartate 155 contributes to the Mg(2+) binding site. Glycine 156 and asparagine 185 together coordinate thiamine diphosphate. The Mg(2+) site is built by asparagine 185 and isoleucine 187. Substrate is bound by residues histidine 261, arginine 358, and serine 385. Histidine 261 contacts thiamine diphosphate. The active-site Proton donor is the glutamate 411. Thiamine diphosphate is bound at residue phenylalanine 437. Substrate contacts are provided by histidine 461, aspartate 469, histidine 473, and arginine 520.

It belongs to the transketolase family. As to quaternary structure, homodimer. It depends on Mg(2+) as a cofactor. Ca(2+) is required as a cofactor. Mn(2+) serves as cofactor. Requires Co(2+) as cofactor. The cofactor is thiamine diphosphate.

The enzyme catalyses D-sedoheptulose 7-phosphate + D-glyceraldehyde 3-phosphate = aldehydo-D-ribose 5-phosphate + D-xylulose 5-phosphate. Functionally, catalyzes the transfer of a two-carbon ketol group from a ketose donor to an aldose acceptor, via a covalent intermediate with the cofactor thiamine pyrophosphate. Thus, catalyzes the reversible transfer of a two-carbon ketol group from sedoheptulose-7-phosphate to glyceraldehyde-3-phosphate, producing xylulose-5-phosphate and ribose-5-phosphate. This Escherichia coli (strain K12) protein is Transketolase 1 (tktA).